A 133-amino-acid chain; its full sequence is Hydrogenase maturation factor HypA (133 aa).

Histidine 2 is a binding site for Ni(2+). Cysteine 73, cysteine 75, cysteine 105, and cysteine 108 together coordinate Zn(2+).

It belongs to the HypA/HybF family.

Functionally, involved in the maturation of [NiFe] hydrogenases. Required for nickel insertion into the metal center of the hydrogenase. The protein is Hydrogenase maturation factor HypA of Methanosarcina barkeri (strain Fusaro / DSM 804).